Here is a 1377-residue protein sequence, read N- to C-terminus: DNA-directed RNA polymerase subunit beta' (1377 aa).

Zn(2+) contacts are provided by cysteine 70, cysteine 72, cysteine 85, and cysteine 88. Mg(2+) contacts are provided by aspartate 460, aspartate 462, and aspartate 464. Positions 808, 882, 889, and 892 each coordinate Zn(2+).

Belongs to the RNA polymerase beta' chain family. In terms of assembly, the RNAP catalytic core consists of 2 alpha, 1 beta, 1 beta' and 1 omega subunit. When a sigma factor is associated with the core the holoenzyme is formed, which can initiate transcription. The cofactor is Mg(2+). Zn(2+) is required as a cofactor.

It catalyses the reaction RNA(n) + a ribonucleoside 5'-triphosphate = RNA(n+1) + diphosphate. In terms of biological role, DNA-dependent RNA polymerase catalyzes the transcription of DNA into RNA using the four ribonucleoside triphosphates as substrates. This Geotalea daltonii (strain DSM 22248 / JCM 15807 / FRC-32) (Geobacter daltonii) protein is DNA-directed RNA polymerase subunit beta'.